The primary structure comprises 164 residues: Peptidyl-prolyl cis-trans isomerase B (164 aa).

In terms of domain architecture, PPIase cyclophilin-type spans 1-162 (MVTFHTNHGD…EDVIIESVTV (162 aa)).

The protein belongs to the cyclophilin-type PPIase family.

The protein localises to the cytoplasm. It catalyses the reaction [protein]-peptidylproline (omega=180) = [protein]-peptidylproline (omega=0). Inhibition by cyclosporin A with a Ki of 25 to 50 mu-mol, a concentration 1000-fold higher than that required for eukaryotic PPIases. Its function is as follows. PPIases accelerate the folding of proteins. It catalyzes the cis-trans isomerization of proline imidic peptide bonds in oligopeptides. This chain is Peptidyl-prolyl cis-trans isomerase B (ppiB), found in Escherichia coli (strain K12).